A 130-amino-acid chain; its full sequence is Large ribosomal subunit protein bL12 (130 aa).

It belongs to the bacterial ribosomal protein bL12 family. Homodimer. Part of the ribosomal stalk of the 50S ribosomal subunit. Forms a multimeric L10(L12)X complex, where L10 forms an elongated spine to which 2 to 4 L12 dimers bind in a sequential fashion. Binds GTP-bound translation factors.

Forms part of the ribosomal stalk which helps the ribosome interact with GTP-bound translation factors. Is thus essential for accurate translation. The protein is Large ribosomal subunit protein bL12 of Prochlorococcus marinus (strain SARG / CCMP1375 / SS120).